A 150-amino-acid polypeptide reads, in one-letter code: 3-dehydroquinate dehydratase (150 aa).

Residue Y26 is the Proton acceptor of the active site. 3 residues coordinate substrate: N77, H83, and D90. H103 serves as the catalytic Proton donor. Residues 104-105 (LS) and R114 each bind substrate.

It belongs to the type-II 3-dehydroquinase family. In terms of assembly, homododecamer.

It carries out the reaction 3-dehydroquinate = 3-dehydroshikimate + H2O. It functions in the pathway metabolic intermediate biosynthesis; chorismate biosynthesis; chorismate from D-erythrose 4-phosphate and phosphoenolpyruvate: step 3/7. Functionally, catalyzes a trans-dehydration via an enolate intermediate. This Enterobacter sp. (strain 638) protein is 3-dehydroquinate dehydratase.